The following is a 314-amino-acid chain: Hydroxyethylthiazole kinase (314 aa).

Residues 1-13 show a composition bias toward low complexity; it reads MSNSASSFADVSS. Residues 1–24 are disordered; that stretch reads MSNSASSFADVSSGCTAGTPVPAD. Substrate is bound at residue Met70. Arg145 and Ser217 together coordinate ATP. A substrate-binding site is contributed by Gly244.

It belongs to the Thz kinase family. Requires Mg(2+) as cofactor.

It catalyses the reaction 5-(2-hydroxyethyl)-4-methylthiazole + ATP = 4-methyl-5-(2-phosphooxyethyl)-thiazole + ADP + H(+). Its pathway is cofactor biosynthesis; thiamine diphosphate biosynthesis; 4-methyl-5-(2-phosphoethyl)-thiazole from 5-(2-hydroxyethyl)-4-methylthiazole: step 1/1. Catalyzes the phosphorylation of the hydroxyl group of 4-methyl-5-beta-hydroxyethylthiazole (THZ). This is Hydroxyethylthiazole kinase from Bifidobacterium longum subsp. infantis (strain ATCC 15697 / DSM 20088 / JCM 1222 / NCTC 11817 / S12).